Here is a 121-residue protein sequence, read N- to C-terminus: Alpha-endosulfine (121 aa).

Positions 1 to 53 are disordered; that stretch reads MSQKQEEENPAEETGEEKQDTQEKEGILPEKAEEAKLKAKYPSLGQKPGGSDF. The residue at position 2 (Ser2) is an N-acetylserine. Phosphoserine is present on Ser2. Residues 16–37 show a composition bias toward basic and acidic residues; the sequence is EEKQDTQEKEGILPEKAEEAKL. At Thr21 the chain carries Phosphothreonine. Ser43 bears the Phosphoserine mark. At Ser67 the chain carries Phosphoserine; by GWL. The tract at residues 79–121 is disordered; the sequence is NKQLPSAGPDKNLVTGDHIPTPQDLPQRKSSLVTSKLAGGQVE. Position 109 is a phosphoserine; by PKA (Ser109).

It belongs to the endosulfine family. Interacts (when phosphorylated at Ser-67) with PPP2R2D. Interacts with ABCC8. Interacts with SNCA; interaction is disrupted when phosphorylated at Ser-109. Phosphorylation at Ser-67 by GWL during mitosis is essential for interaction with PPP2R2D (PR55-delta) and subsequent inactivation of PP2A. Phosphorylated by PKA.

It localises to the cytoplasm. Its function is as follows. Protein phosphatase inhibitor that specifically inhibits protein phosphatase 2A (PP2A) during mitosis. When phosphorylated at Ser-67 during mitosis, specifically interacts with PPP2R2D (PR55-delta) and inhibits its activity, leading to inactivation of PP2A, an essential condition to keep cyclin-B1-CDK1 activity high during M phase. Also acts as a stimulator of insulin secretion by interacting with sulfonylurea receptor (ABCC8), thereby preventing sulfonylurea from binding to its receptor and reducing K(ATP) channel currents. This chain is Alpha-endosulfine (ENSA), found in Bos taurus (Bovine).